A 579-amino-acid polypeptide reads, in one-letter code: Mitochondrial distribution and morphology protein 31 (579 aa).

A mitochondrion-targeting transit peptide spans 1 to 47; that stretch reads MSLFTRPFLRSPRQFSVARYVYWARSPALRSNLRIPSIAAASLRAYS. The Mitochondrial matrix segment spans residues 48–114; it reads NESKTGRDAP…SDDISAFISW (67 aa). A helical membrane pass occupies residues 115–135; the sequence is ILVSNIFIFIFWTTTFVSLIL. The Mitochondrial intermembrane portion of the chain corresponds to 136–558; that stretch reads YLINTVFAQE…DEKRTLRLRR (423 aa). The helical transmembrane segment at 559–578 threads the bilayer; it reads VGFWSLQLILQVILMSLGAI. Position 579 (A579) is a topological domain, mitochondrial matrix.

The protein belongs to the MDM31/MDM32 family. Interacts with MDM32. Participates in a complex of about 600 kDa.

The protein localises to the mitochondrion inner membrane. In terms of biological role, involved in the organization of the mitochondrial membranes and the global structure of the mitochondria. Also required for mitochondrial distribution and mobility as well as for the maintenance of mitochondrial DNA nucleoids structures. The protein is Mitochondrial distribution and morphology protein 31 (MDM31) of Saccharomyces cerevisiae (strain ATCC 204508 / S288c) (Baker's yeast).